The chain runs to 86 residues: Neurotoxin homolog NL1 (86 aa).

Residues 1–21 (MKTLLLTLVVVTMVCMDLGYT) form the signal peptide. 4 disulfides stabilise this stretch: cysteine 24/cysteine 45, cysteine 38/cysteine 62, cysteine 66/cysteine 78, and cysteine 79/cysteine 84.

Belongs to the three-finger toxin family. Short-chain subfamily. Orphan group VIII (haditoxin) sub-subfamily. In terms of assembly, homodimer; non-covalently linked. Expressed by the venom gland.

The protein resides in the secreted. Functionally, antagonist of muscle and neuronal nicotinic acetylcholine receptors (nAChR) with highest affinity for neuronal alpha-7/CHRNA7 nAChRs. The chain is Neurotoxin homolog NL1 from Naja atra (Chinese cobra).